The following is an 830-amino-acid chain: Serine/threonine-protein kinase pkn2 (830 aa).

Residues 1-605 are Cytoplasmic-facing; the sequence is MLAPDSLVLD…GELLRQRRRE (605 aa). The region spanning 13–283 is the Protein kinase domain; that stretch reads FRVLRPLGSG…DALAAAHSAL (271 aa). Residues 19–27 and Lys-42 each bind ATP; that span reads LGSGGMGEV. Asp-135 serves as the catalytic Proton acceptor. The segment at 296-326 is disordered; it reads VPQPGSGATPSSGTSVFGTGSASGSSSGPTG. A compositionally biased stretch (low complexity) spans 299–326; it reads PGSGATPSSGTSVFGTGSASGSSSGPTG. The 116-residue stretch at 396–511 folds into the Guanylate cyclase domain; it reads TVMLTDIQGF…EPMEVIEAVE (116 aa). A helical transmembrane segment spans residues 606-623; the sequence is AALVAGAVVLLGAGAAWL. Topologically, residues 624–830 are periplasmic; that stretch reads SQRNDAGTRA…AIKSLKQKSD (207 aa).

It belongs to the protein kinase superfamily. Ser/Thr protein kinase family.

The protein localises to the cell membrane. The catalysed reaction is L-seryl-[protein] + ATP = O-phospho-L-seryl-[protein] + ADP + H(+). The enzyme catalyses L-threonyl-[protein] + ATP = O-phospho-L-threonyl-[protein] + ADP + H(+). Functionally, regulates the activity of endogenous beta-lactamase or related enzymes, by blocking their secretion by phosphorylation, in response to an external signal yet to be identified. This is Serine/threonine-protein kinase pkn2 (pkn2) from Myxococcus xanthus.